A 526-amino-acid chain; its full sequence is Thioredoxin reductase 2, mitochondrial (526 aa).

A mitochondrion-targeting transit peptide spans 1–36 (MAAIVAALRGSSGRFRPQTRVLTRGTRGAAGAASAA). 43–72 (DLLVIGGGSGGLACAKEAAQLGRKVAVADY) lines the FAD pocket. N6-succinyllysine is present on K81. A disulfide bond links C88 and C93. Residues K177 and K331 each carry the N6-succinyllysine modification. Residue H499 is the Proton acceptor of the active site. The cysteinyl-selenocysteine (Cys-Sec) cross-link spans 524-525 (CU). U525 is a non-standard amino acid (selenocysteine).

Belongs to the class-I pyridine nucleotide-disulfide oxidoreductase family. In terms of assembly, homodimer. FAD is required as a cofactor. As to expression, expressed in liver, kidney, adrenal gland and heart.

It is found in the mitochondrion. The catalysed reaction is [thioredoxin]-dithiol + NADP(+) = [thioredoxin]-disulfide + NADPH + H(+). Involved in the control of reactive oxygen species levels and the regulation of mitochondrial redox homeostasis. Maintains mitochondrial thioredoxin in a reduced state. May play a role in redox-regulated cell signaling. The chain is Thioredoxin reductase 2, mitochondrial (Txnrd2) from Rattus norvegicus (Rat).